Here is a 260-residue protein sequence, read N- to C-terminus: Type III pantothenate kinase (260 aa).

Asp6–Val13 provides a ligand contact to ATP. Gly108–Arg111 is a substrate binding site. The Proton acceptor role is filled by Asp110. Asp130 serves as a coordination point for K(+). An ATP-binding site is contributed by Thr133. Residue Thr187 participates in substrate binding.

This sequence belongs to the type III pantothenate kinase family. As to quaternary structure, homodimer. Requires NH4(+) as cofactor. K(+) serves as cofactor.

It is found in the cytoplasm. It catalyses the reaction (R)-pantothenate + ATP = (R)-4'-phosphopantothenate + ADP + H(+). It functions in the pathway cofactor biosynthesis; coenzyme A biosynthesis; CoA from (R)-pantothenate: step 1/5. Catalyzes the phosphorylation of pantothenate (Pan), the first step in CoA biosynthesis. The sequence is that of Type III pantothenate kinase from Rhizorhabdus wittichii (strain DSM 6014 / CCUG 31198 / JCM 15750 / NBRC 105917 / EY 4224 / RW1) (Sphingomonas wittichii).